The chain runs to 139 residues: MGREKKQEYALFTAWGASFIATLGSLYFSEIMKFEPCVLCWYQRIFMYPFVLWLGIAVVKKDYRIASYSLPIASIGACISLYHYVIQKVAAFSAAGAACGRVPCTGEYINWFGFVTIPFLALIGFITIAVCSFIVIKNK.

Residues Glu8–Tyr27 form a helical membrane-spanning segment. Cysteines 37 and 40 form a disulfide. Helical transmembrane passes span Tyr42 to Lys61 and Tyr68 to Val85. Residues Cys99 and Cys104 are joined by a disulfide bond. A helical membrane pass occupies residues Gly113–Val135.

This sequence belongs to the DsbB family. BdbC subfamily.

It localises to the cell membrane. In terms of biological role, required for disulfide bond formation in some proteins. The polypeptide is Probable disulfide formation protein C 1 (bdbC1) (Bacillus anthracis).